Here is a 185-residue protein sequence, read N- to C-terminus: Ribosome-recycling factor (185 aa).

This sequence belongs to the RRF family.

It is found in the cytoplasm. Functionally, responsible for the release of ribosomes from messenger RNA at the termination of protein biosynthesis. May increase the efficiency of translation by recycling ribosomes from one round of translation to another. This chain is Ribosome-recycling factor, found in Ehrlichia chaffeensis (strain ATCC CRL-10679 / Arkansas).